Here is a 157-residue protein sequence, read N- to C-terminus: MAEKNERPIKVVAENRKARFNYAIEDTVEAGIALTGTEVKSVRNGKTTIAESYADSRGGEIWLINANIPEYLQANRFNHEPKRPRKLLLHRKQINKLMGAVERQGMTLIPLKLYFNEKGRAKLLLALAKGKQLHDKRETEKKRDWSKEKGRLMRAKG.

The span at 134–151 (HDKRETEKKRDWSKEKGR) shows a compositional bias: basic and acidic residues. The disordered stretch occupies residues 134–157 (HDKRETEKKRDWSKEKGRLMRAKG).

This sequence belongs to the SmpB family.

Its subcellular location is the cytoplasm. Its function is as follows. Required for rescue of stalled ribosomes mediated by trans-translation. Binds to transfer-messenger RNA (tmRNA), required for stable association of tmRNA with ribosomes. tmRNA and SmpB together mimic tRNA shape, replacing the anticodon stem-loop with SmpB. tmRNA is encoded by the ssrA gene; the 2 termini fold to resemble tRNA(Ala) and it encodes a 'tag peptide', a short internal open reading frame. During trans-translation Ala-aminoacylated tmRNA acts like a tRNA, entering the A-site of stalled ribosomes, displacing the stalled mRNA. The ribosome then switches to translate the ORF on the tmRNA; the nascent peptide is terminated with the 'tag peptide' encoded by the tmRNA and targeted for degradation. The ribosome is freed to recommence translation, which seems to be the essential function of trans-translation. This chain is SsrA-binding protein, found in Rhodopseudomonas palustris (strain BisA53).